A 374-amino-acid chain; its full sequence is Multicilin (374 aa).

Disordered regions lie at residues 18–72 and 84–105; these read CPNR…ALPA and CSSF…QSHS. Residues 168 to 216 adopt a coiled-coil conformation; that stretch reads EQYWKEVADQNQRALGDALIENNQLHATLTQKQEEIASLKERNLQLKEL. Positions 284–306 are disordered; sequence LQSRDPKRLRLQPEPQSLDRRPG.

This sequence belongs to the geminin family. In terms of assembly, heterodimer (via coiled-coil domain) with GMNN (via coiled-coil domain); targets GMNN to the nucleus. Can form homodimers (in vitro, via coiled-coil domain), but these are much less stable than the heterodimer formed with GMNN.

The protein resides in the nucleus. Its function is as follows. Transcription regulator specifically required for multiciliate cell differentiation. Acts in a multiprotein complex containing E2F4 and E2F5 that binds and activates genes required for centriole biogenesis. Required for the deuterosome-mediated acentriolar pathway. Plays a role in mitotic cell cycle progression by promoting cell cycle exit. Modulates GMNN activity by reducing its affinity for CDT1. This Bos taurus (Bovine) protein is Multicilin (MCIDAS).